A 37-amino-acid chain; its full sequence is Large ribosomal subunit protein bL36c (37 aa).

The protein belongs to the bacterial ribosomal protein bL36 family.

Its subcellular location is the plastid. The protein localises to the chloroplast. In Euglena gracilis, this protein is Large ribosomal subunit protein bL36c (rpl36).